Consider the following 130-residue polypeptide: MAENQYYGTGRRKSSSARVFVKAGSGNIVINQRSLDQYFGRETARMVVRQPLELVDMVGKLDLYITVKGGGISGQAGAIRHGITRALMEYDETLRADLRKAGFVTRDARQVERKKVGLRKARRRPQFSKR.

The protein belongs to the universal ribosomal protein uS9 family.

This Sodalis glossinidius (strain morsitans) protein is Small ribosomal subunit protein uS9.